The chain runs to 381 residues: Estradiol 17-beta-dehydrogenase 2 (381 aa).

The chain crosses the membrane as a helical; Signal-anchor for type II membrane protein span at residues 4–24 (FSSESAWLCLTATAVLGGMLL). An NAD(+)-binding site is contributed by 83–112 (QKAVLVTGADSGFGHALAKHLDKLGFTVFA). Substrate is bound at residue Ser-220. Tyr-233 functions as the Proton acceptor in the catalytic mechanism.

Belongs to the short-chain dehydrogenases/reductases (SDR) family. In terms of assembly, homodimer. Highly expressed in the placenta, and in the small intestine, and liver.

Its subcellular location is the endoplasmic reticulum membrane. The enzyme catalyses 17beta-estradiol + NAD(+) = estrone + NADH + H(+). The catalysed reaction is testosterone + NAD(+) = androst-4-ene-3,17-dione + NADH + H(+). It carries out the reaction 17beta-hydroxy-5alpha-androstan-3-one + NAD(+) = 5alpha-androstan-3,17-dione + NADH + H(+). It catalyses the reaction (20S)-hydroxypregn-4-en-3-one + NAD(+) = progesterone + NADH + H(+). Catalyzes the NAD-dependent oxidation of highly active 17beta-hydroxysteroids, such as estradiol (E2), testosterone (T), and dihydrotestosterone (DHT), to their less active forms and thus regulates the biological potency of these steroids. Oxidizes estradiol to estrone, testosterone to androstenedione, and dihydrotestosterone to 5alpha-androstan-3,17-dione. Also has 20-alpha-HSD activity. This Rattus norvegicus (Rat) protein is Estradiol 17-beta-dehydrogenase 2 (Hsd17b2).